A 119-amino-acid chain; its full sequence is Large ribosomal subunit protein bL20 (119 aa).

It belongs to the bacterial ribosomal protein bL20 family.

Functionally, binds directly to 23S ribosomal RNA and is necessary for the in vitro assembly process of the 50S ribosomal subunit. It is not involved in the protein synthesizing functions of that subunit. This chain is Large ribosomal subunit protein bL20, found in Streptococcus pneumoniae serotype 2 (strain D39 / NCTC 7466).